A 1646-amino-acid polypeptide reads, in one-letter code: MRLPSWLKNSSSWLWTAALSRTVQRRLLAFALRKLIGSILLENVQPEDIDILFSKGVLMLSNLQLNCSFLNAVVSLPMINFTKGTLRRLILRLNVTDIVNLNVELEVNGLSLEIELVPPDESLSSTTYEDAPSQLDILDNVVEYMNKTASQDFEDEVINEGLESEIDGSSHNLLDSILQKCLASTSVLMQDALVYIGTANMSTRLEAKLDFMSFSSVKSNSTSRLLNINGITVSMVRPISKSNAGSSSPPRSEESFVSMDSSSSIVEGFENDLSPSQVTLNESSIISSNREEESFYSVHDSVTQKKTRTSWLIFQCSGEFRLVFSIESSNLLVIESHVPSCVLNINSQVIAFLLYLYGYFLPAPSTPGFSSNKPPLTMLQLDIHISSVQILTHCKLPESQDFSMHNDVDELLHTIPSNGAVFEMKINQIQIFNDNNDIDELTMTFSDLDIFMDSVTLVSFGKSLQSPCSLIFKKLERIVSLFIHIPGGEISLPLGKALLLQESFVEFTNDISNLQNFLSNSDPFKRSIQETFEAPKPFEVEMNQPSFEIIALFDELQLQILNELSTQSLYKLTLRVSHLQFTRKSTGSLSSVLIFVKKIGCQSELFNCENSDWTKVSSSTAFHLSNSLFETHDTTGTSNFAVSIQQEKHYYPVFQPAPTEFSYPEKHFYFAVDNFNVFISKEVVRLFKTLYETIASSLVTPVTPNKLVTSDYKNVLKIRTRTFSLSLLNDDGSSFALKCIRIKHYMCWAGAQLISLSLRLYNVSAEYLSESLEILPVVSFIRNLRNDEKYLLNADFSYALKRSSGSNDNTIFVKITDLGYEHYPTCPWISDLLKTYFPQDPEVPFLAFPDFPFNIKLDLRESIIGLNPRTLEAKLLLYLKSLDVEIDALVASNPLNIRIMAAETVVYIIDKLNQSVLEGKTSVLKREILNSSLHFPGLSIKDTIEFVVKSLGYVEISQLKNLTLSLVVNAEEGVFSTLITVDNLDAQVQSCADSTELLIKVLSDLGSTEDEEISDCYLALPIEDYAKSLTEVDYNFFENRGIDYKSNPTEQSTVLVSSDNDISSQEIKIVDDYYISSNEHSTHASDLASVSSEEFVIDDGSSSIIDISDELQDESSSRDSLKKGIELIEDYYLSQSTSKLESSVEGKNYLLKVKFKDINVNWDLHDGYDWEATRATISSAIEKLCDSSSQNDKISPEAKTLLFQSIVIKSFSKVGRLNINHVSEPIDSDEFADYLSKSISYHLRLGKSKSKKIGIEIKDLQGSFTVYADSNEPNAVLNDLDIGLKDLIIYDHLSTSTWNKFFGRDSRSPSSKNRNQHMNAQIVTVRPLPELNNRELRLEFSVLPCKMYIDQDTLDFLIRFLTFQTPSSSETLNTEPDLPFFQSICINATHVTIDFKFKSADKVGLRSGKLPDLGSLIVMQGSEVFLRQLQIYGLSGAEEFLNALLNVWLQDIRNNQLSKVLNGVVPIRTMFTVGRGIKDIFVSPVRGLQGNHSVGSFRHGIIKFTEKYVNDFLSLNAQGATGTHSLLRQAESYLERGSNASASASRARSYYAEQPETIEQGLRQGYSGLKQGLLGAKSTLMGLPRETRSHKSLGGVAQTVGRKVPLIVLQPMIGATEAVSKTLLGLSNSLQPQRRQDMREKYKRPG.

The segment at 16 to 35 (TAALSRTVQRRLLAFALRKL) is ER-targeting domain. A Chorein N-terminal domain is found at 26–121 (RLLAFALRKL…LEIELVPPDE (96 aa)). The PAS-targeting domain stretch occupies residues 1465-1490 (VPIRTMFTVGRGIKDIFVSPVRGLQG).

This sequence belongs to the ATG2 family.

Its subcellular location is the preautophagosomal structure membrane. The protein localises to the endoplasmic reticulum membrane. The catalysed reaction is a 1,2-diacyl-sn-glycero-3-phosphocholine(in) = a 1,2-diacyl-sn-glycero-3-phosphocholine(out). It carries out the reaction a 1,2-diacyl-sn-glycero-3-phospho-L-serine(in) = a 1,2-diacyl-sn-glycero-3-phospho-L-serine(out). It catalyses the reaction a 1,2-diacyl-sn-glycero-3-phosphoethanolamine(in) = a 1,2-diacyl-sn-glycero-3-phosphoethanolamine(out). Lipid transfer protein required for autophagosomes completion and peroxisome degradation. Tethers the edge of the isolation membrane (IM) to the endoplasmic reticulum (ER) and mediates direct lipid transfer from ER to IM for IM expansion. Atg2 binds to the ER exit site (ERES), which is the membrane source for autophagosome formation, using basic residues in its N-terminal region (NR) and to the expanding edge of the IM through its C-terminal region. The latter binding is assisted by an atg18-PtdIns3P interaction. Atg2 then extracts phospholipids from the membrane source using its NR and transfers them to atg9 to the IM through its predicted beta-sheet-rich structure for membrane expansion. Atg2 is also involved in the recruitment of lipids to a restricted region close to the vacuole, termed the vacuole-isolation membrane contact site (VICS), which is also essential for autophagosome formation. May have a role in sporulation. In Schizosaccharomyces pombe (strain 972 / ATCC 24843) (Fission yeast), this protein is Autophagy-related protein 2 (atg2).